The chain runs to 1088 residues: RNA-directed RNA polymerase (1088 aa).

The region spanning 501-687 (LSYGDVTRFL…AKRYIAGGKI (187 aa)) is the RdRp catalytic domain.

Belongs to the reoviridae RNA-directed RNA polymerase family. Interacts with VP3 (Potential). Interacts with VP2; this interaction activates VP1. Interacts with NSP5; this interaction is probably necessary for the formation of functional virus factories. Interacts with NSP2; this interaction is weak. Mg(2+) is required as a cofactor.

It localises to the virion. The catalysed reaction is RNA(n) + a ribonucleoside 5'-triphosphate = RNA(n+1) + diphosphate. RNA-directed RNA polymerase that is involved in both transcription and genome replication. Together with VP3 capping enzyme, forms an enzyme complex positioned near the channels situated at each of the five-fold vertices of the core. Following infection, the outermost layer of the virus is lost, leaving a double-layered particle (DLP) made up of the core and VP6 shell. VP1 then catalyzes the transcription of fully conservative plus-strand genomic RNAs that are extruded through the DLP's channels into the cytoplasm where they function as mRNAs for translation of viral proteins. One copy of each of the viral (+)RNAs is also recruited during core assembly, together with newly synthesized polymerase complexes and VP2. The polymerase of these novo-formed particles catalyzes the synthesis of complementary minus-strands leading to dsRNA formation. To do so, the polymerase specifically recognizes and binds 4 bases 5'-UGUG-3' in the conserved 3'-sequence of plus-strand RNA templates. VP2 presumably activates the autoinhibited VP1-RNA complex to coordinate packaging and genome replication. Once dsRNA synthesis is complete, the polymerase switches to the transcriptional mode, thus providing secondary transcription. The chain is RNA-directed RNA polymerase from Bos taurus (Bovine).